A 68-amino-acid polypeptide reads, in one-letter code: Large ribosomal subunit protein bL35 (68 aa).

Basic residues-rich tracts occupy residues 1–15 (MPKM…KRFK) and 23–38 (TARK…HKSS). The segment at 1–38 (MPKMKSHSGTKKRFKVTGSGKVTARKAGKRHLNEHKSS) is disordered.

The protein belongs to the bacterial ribosomal protein bL35 family.

The polypeptide is Large ribosomal subunit protein bL35 (Cutibacterium acnes (strain DSM 16379 / KPA171202) (Propionibacterium acnes)).